The chain runs to 157 residues: 2-C-methyl-D-erythritol 2,4-cyclodiphosphate synthase (157 aa).

Positions 8 and 10 each coordinate a divalent metal cation. 4-CDP-2-C-methyl-D-erythritol 2-phosphate is bound by residues 8 to 10 (DVH) and 34 to 35 (HS). Histidine 42 is an a divalent metal cation binding site. 4-CDP-2-C-methyl-D-erythritol 2-phosphate-binding positions include 56–58 (DIG), 61–65 (FPDTD), 132–135 (TTEE), and phenylalanine 139.

This sequence belongs to the IspF family. Homotrimer. Requires a divalent metal cation as cofactor.

The catalysed reaction is 4-CDP-2-C-methyl-D-erythritol 2-phosphate = 2-C-methyl-D-erythritol 2,4-cyclic diphosphate + CMP. It functions in the pathway isoprenoid biosynthesis; isopentenyl diphosphate biosynthesis via DXP pathway; isopentenyl diphosphate from 1-deoxy-D-xylulose 5-phosphate: step 4/6. Functionally, involved in the biosynthesis of isopentenyl diphosphate (IPP) and dimethylallyl diphosphate (DMAPP), two major building blocks of isoprenoid compounds. Catalyzes the conversion of 4-diphosphocytidyl-2-C-methyl-D-erythritol 2-phosphate (CDP-ME2P) to 2-C-methyl-D-erythritol 2,4-cyclodiphosphate (ME-CPP) with a corresponding release of cytidine 5-monophosphate (CMP). This is 2-C-methyl-D-erythritol 2,4-cyclodiphosphate synthase from Clostridium botulinum (strain Alaska E43 / Type E3).